Here is a 44-residue protein sequence, read N- to C-terminus: MSDKPGMAEIEKFDKSKLKKTETQEKNPLSSKETIEQERQAGES.

The interval 1–44 (MSDKPGMAEIEKFDKSKLKKTETQEKNPLSSKETIEQERQAGES) is disordered. 2 stretches are compositionally biased toward basic and acidic residues: residues 9-25 (EIEKFDKSKLKKTETQE) and 33-44 (ETIEQERQAGES).

Belongs to the thymosin beta family. In terms of tissue distribution, ubiquitous.

It is found in the cytoplasm. Its subcellular location is the cytoskeleton. In terms of biological role, plays an important role in the organization of the cytoskeleton. Binds to and sequesters actin monomers (G actin) and therefore inhibits actin polymerization. This Homo sapiens (Human) protein is Thymosin beta-4, Y-chromosomal (TMSB4Y).